A 299-amino-acid chain; its full sequence is GTPase Era (299 aa).

Residues Lys5–Glu172 enclose the Era-type G domain. Residues Gly13–Ser20 are G1. Residue Gly13–Ser20 coordinates GTP. The segment at Gln39–Asn43 is G2. Positions Asp60–Gly63 are G3. GTP contacts are provided by residues Asp60 to Ile64 and Asn122 to Asp125. The G4 stretch occupies residues Asn122 to Asp125. A G5 region spans residues Ile151–Ala153. The KH type-2 domain occupies Thr203 to Arg280.

This sequence belongs to the TRAFAC class TrmE-Era-EngA-EngB-Septin-like GTPase superfamily. Era GTPase family. In terms of assembly, monomer.

It is found in the cytoplasm. The protein resides in the cell membrane. Its function is as follows. An essential GTPase that binds both GDP and GTP, with rapid nucleotide exchange. Plays a role in 16S rRNA processing and 30S ribosomal subunit biogenesis and possibly also in cell cycle regulation and energy metabolism. The sequence is that of GTPase Era from Staphylococcus aureus (strain NCTC 8325 / PS 47).